Consider the following 505-residue polypeptide: AMP phosphorylase (505 aa).

AMP-binding positions include Gly170, Ser196 to Ser201, and Thr205. Catalysis depends on Asp258, which acts as the Proton donor. AMP is bound by residues Ser266 and Lys290.

This sequence belongs to the thymidine/pyrimidine-nucleoside phosphorylase family. Type 2 subfamily.

It carries out the reaction AMP + phosphate = alpha-D-ribose 1,5-bisphosphate + adenine. The enzyme catalyses CMP + phosphate = cytosine + alpha-D-ribose 1,5-bisphosphate. The catalysed reaction is UMP + phosphate = alpha-D-ribose 1,5-bisphosphate + uracil. Catalyzes the conversion of AMP and phosphate to adenine and ribose 1,5-bisphosphate (R15P). Exhibits phosphorylase activity toward CMP and UMP in addition to AMP. Functions in an archaeal AMP degradation pathway, together with R15P isomerase and RubisCO. In Methanococcus maripaludis (strain C7 / ATCC BAA-1331), this protein is AMP phosphorylase.